The sequence spans 135 residues: Small ribosomal subunit protein uS11 (135 aa).

This sequence belongs to the universal ribosomal protein uS11 family. Part of the 30S ribosomal subunit. Interacts with proteins S7 and S18. Binds to IF-3.

In terms of biological role, located on the platform of the 30S subunit, it bridges several disparate RNA helices of the 16S rRNA. Forms part of the Shine-Dalgarno cleft in the 70S ribosome. The polypeptide is Small ribosomal subunit protein uS11 (Protochlamydia amoebophila (strain UWE25)).